Here is a 182-residue protein sequence, read N- to C-terminus: Large ribosomal subunit protein uL6 (182 aa).

Belongs to the universal ribosomal protein uL6 family. In terms of assembly, part of the 50S ribosomal subunit.

This protein binds to the 23S rRNA, and is important in its secondary structure. It is located near the subunit interface in the base of the L7/L12 stalk, and near the tRNA binding site of the peptidyltransferase center. This chain is Large ribosomal subunit protein uL6, found in Aeropyrum pernix (strain ATCC 700893 / DSM 11879 / JCM 9820 / NBRC 100138 / K1).